The chain runs to 347 residues: Protein RecA (347 aa).

ATP is bound at residue 65-72 (GPESSGKT). The segment covering 327 to 336 (KFEPTELSRE) has biased composition (basic and acidic residues). Residues 327 to 347 (KFEPTELSREEGDEDTLEDAM) are disordered. The span at 337–347 (EGDEDTLEDAM) shows a compositional bias: acidic residues.

The protein belongs to the RecA family.

It localises to the cytoplasm. In terms of biological role, can catalyze the hydrolysis of ATP in the presence of single-stranded DNA, the ATP-dependent uptake of single-stranded DNA by duplex DNA, and the ATP-dependent hybridization of homologous single-stranded DNAs. It interacts with LexA causing its activation and leading to its autocatalytic cleavage. The polypeptide is Protein RecA (Xylella fastidiosa (strain M12)).